We begin with the raw amino-acid sequence, 336 residues long: Putative cysteine synthase (336 aa).

An N6-(pyridoxal phosphate)lysine modification is found at Lys-41. Residues Asn-71, 179–183 (GTGGS), and Ser-269 each bind pyridoxal 5'-phosphate.

It belongs to the cysteine synthase/cystathionine beta-synthase family. It depends on pyridoxal 5'-phosphate as a cofactor.

The enzyme catalyses O-acetyl-L-serine + hydrogen sulfide = L-cysteine + acetate. As it is highly similar to bacterial and plant cysteine synthases, it is possible that it catalyzes a related reaction. The sequence is that of Putative cysteine synthase from Sinorhizobium fredii (strain NBRC 101917 / NGR234).